Here is a 95-residue protein sequence, read N- to C-terminus: Aspartyl/glutamyl-tRNA(Asn/Gln) amidotransferase subunit C (95 aa).

Belongs to the GatC family. Heterotrimer of A, B and C subunits.

It carries out the reaction L-glutamyl-tRNA(Gln) + L-glutamine + ATP + H2O = L-glutaminyl-tRNA(Gln) + L-glutamate + ADP + phosphate + H(+). The enzyme catalyses L-aspartyl-tRNA(Asn) + L-glutamine + ATP + H2O = L-asparaginyl-tRNA(Asn) + L-glutamate + ADP + phosphate + 2 H(+). Functionally, allows the formation of correctly charged Asn-tRNA(Asn) or Gln-tRNA(Gln) through the transamidation of misacylated Asp-tRNA(Asn) or Glu-tRNA(Gln) in organisms which lack either or both of asparaginyl-tRNA or glutaminyl-tRNA synthetases. The reaction takes place in the presence of glutamine and ATP through an activated phospho-Asp-tRNA(Asn) or phospho-Glu-tRNA(Gln). The polypeptide is Aspartyl/glutamyl-tRNA(Asn/Gln) amidotransferase subunit C (Bradyrhizobium sp. (strain BTAi1 / ATCC BAA-1182)).